A 373-amino-acid polypeptide reads, in one-letter code: Erythronate-4-phosphate dehydrogenase (373 aa).

Substrate is bound by residues Ser-45 and Thr-66. Asp-146 and Thr-173 together coordinate NAD(+). The active site involves Arg-206. An NAD(+)-binding site is contributed by Asp-230. The active site involves Glu-235. Catalysis depends on His-252, which acts as the Proton donor. Gly-255 contributes to the NAD(+) binding site. Residue Tyr-256 participates in substrate binding.

Belongs to the D-isomer specific 2-hydroxyacid dehydrogenase family. PdxB subfamily. Homodimer.

It localises to the cytoplasm. The catalysed reaction is 4-phospho-D-erythronate + NAD(+) = (R)-3-hydroxy-2-oxo-4-phosphooxybutanoate + NADH + H(+). It participates in cofactor biosynthesis; pyridoxine 5'-phosphate biosynthesis; pyridoxine 5'-phosphate from D-erythrose 4-phosphate: step 2/5. Catalyzes the oxidation of erythronate-4-phosphate to 3-hydroxy-2-oxo-4-phosphonooxybutanoate. In Saccharophagus degradans (strain 2-40 / ATCC 43961 / DSM 17024), this protein is Erythronate-4-phosphate dehydrogenase.